We begin with the raw amino-acid sequence, 747 residues long: Internal virion protein gp15 (747 aa).

The protein belongs to the T7virus internal virion protein gp15 family. Homooctamer. Interacts with gp16; after ejection the gp15-gp16 complex composed of a gp15 octamer and a gp16 tetramer probably binds both the viral DNA and the host inner membrane. Interacts with gp14.

Its subcellular location is the virion. It is found in the host periplasm. Component of the cylindrical core that assembles on the inner surface of the capsid during capsid formation and plays a role in viral DNA ejection into the host cell. The inner core is composed of stacked rings of gp14, gp15 and gp16 proteins. Following binding to the host cell surface, the internal core is disassembled and gp15 is ejected along with gp14 and gp16 into the infected cell. Gp15 probably remains associated with gp16. The gp15-gp16 complex binds to both the viral DNA and the host inner membrane, probably escorting the leading end of the genome through the periplasm and controlling the extend of DNA translocated into the host cell. This is Internal virion protein gp15 from Escherichia phage T7 (Bacteriophage T7).